Reading from the N-terminus, the 155-residue chain is Small ribosomal subunit protein uS7c (155 aa).

This sequence belongs to the universal ribosomal protein uS7 family. As to quaternary structure, part of the 30S ribosomal subunit.

Its subcellular location is the plastid. It is found in the chloroplast. In terms of biological role, one of the primary rRNA binding proteins, it binds directly to 16S rRNA where it nucleates assembly of the head domain of the 30S subunit. This Lactoris fernandeziana protein is Small ribosomal subunit protein uS7c (rps7).